The sequence spans 77 residues: Omega-conotoxin-like 6 (77 aa).

Residues 1-22 (MKLTCVVIIAVLLLTACQLITA) form the signal peptide. The propeptide occupies 23–50 (DDSRGVQKHRSLRSTTKVSKSTSCMEAG). Cystine bridges form between C46/C61, C53/C64, and C60/C71.

This sequence belongs to the conotoxin O1 superfamily. As to expression, expressed by the venom duct.

It is found in the secreted. In terms of biological role, omega-conotoxins act at presynaptic membranes, they bind and block voltage-gated calcium channels (Cav). The chain is Omega-conotoxin-like 6 from Conus striatus (Striated cone).